We begin with the raw amino-acid sequence, 290 residues long: Putative OX-2 membrane glycoprotein homolog (290 aa).

An N-terminal signal peptide occupies residues 1–17 (MSSLMLRLLPLLYIISA). The Extracellular segment spans residues 18–267 (HFVLHPETSP…SDETVFTWTV (250 aa)). The region spanning 23–135 (PETSPSLIYE…TFTVDNEKTS (113 aa)) is the Ig-like V-type domain. C41 and C125 are oxidised to a cystine. Residues N71, N104, N194, and N202 are each glycosylated (N-linked (GlcNAc...) asparagine; by host). The Ig-like C2-type domain occupies 146 to 236 (PIVVLYFRYL…TNQKASALVT (91 aa)). A helical transmembrane segment spans residues 268-288 (PLILILISVIVLLISVCIVAF). Topologically, residues 289–290 (KS) are cytoplasmic.

It is found in the membrane. This chain is Putative OX-2 membrane glycoprotein homolog (U85), found in Homo sapiens (Human).